A 445-amino-acid chain; its full sequence is Cryptochrome DASH (445 aa).

Positions 4-137 (KIGLYWFTFD…VIVQHSVRSL (134 aa)) constitute a Photolyase/cryptochrome alpha/beta domain.

It belongs to the DNA photolyase class-1 family. FAD serves as cofactor. The cofactor is (6R)-5,10-methylene-5,6,7,8-tetrahydrofolate.

Functionally, may have a photoreceptor function. Binds DNA; probably functions as a transcriptional repressor. This chain is Cryptochrome DASH (cry), found in Vibrio parahaemolyticus serotype O3:K6 (strain RIMD 2210633).